A 161-amino-acid chain; its full sequence is Endoribonuclease YbeY (161 aa).

The Zn(2+) site is built by H120, H124, and D130.

The protein belongs to the endoribonuclease YbeY family. Requires Zn(2+) as cofactor.

The protein resides in the cytoplasm. Single strand-specific metallo-endoribonuclease involved in late-stage 70S ribosome quality control and in maturation of the 3' terminus of the 16S rRNA. This chain is Endoribonuclease YbeY, found in Chlamydia trachomatis serovar A (strain ATCC VR-571B / DSM 19440 / HAR-13).